The primary structure comprises 329 residues: Fructose-1,6-bisphosphatase class 1 (329 aa).

Residues Glu-84, Asp-103, Leu-105, and Asp-106 each coordinate Mg(2+). Residues 106 to 109 (DGSS), Asn-196, and Lys-262 each bind substrate. Position 268 (Glu-268) interacts with Mg(2+).

It belongs to the FBPase class 1 family. Homotetramer. Mg(2+) is required as a cofactor.

The protein localises to the cytoplasm. It carries out the reaction beta-D-fructose 1,6-bisphosphate + H2O = beta-D-fructose 6-phosphate + phosphate. Its pathway is carbohydrate biosynthesis; gluconeogenesis. The protein is Fructose-1,6-bisphosphatase class 1 of Shewanella pealeana (strain ATCC 700345 / ANG-SQ1).